Here is a 660-residue protein sequence, read N- to C-terminus: Acetyl-coenzyme A synthetase (660 aa).

CoA is bound by residues arginine 197 to lysine 200 and threonine 317. Residues glycine 397 to proline 399, aspartate 421 to threonine 426, aspartate 512, and arginine 528 contribute to the ATP site. Serine 536 lines the CoA pocket. Arginine 539 lines the ATP pocket. Mg(2+) is bound by residues valine 550 and valine 555. Lysine 625 is subject to N6-acetyllysine.

This sequence belongs to the ATP-dependent AMP-binding enzyme family. The cofactor is Mg(2+). In terms of processing, acetylated. Deacetylation by the SIR2-homolog deacetylase activates the enzyme.

It catalyses the reaction acetate + ATP + CoA = acetyl-CoA + AMP + diphosphate. Its function is as follows. Catalyzes the conversion of acetate into acetyl-CoA (AcCoA), an essential intermediate at the junction of anabolic and catabolic pathways. AcsA undergoes a two-step reaction. In the first half reaction, AcsA combines acetate with ATP to form acetyl-adenylate (AcAMP) intermediate. In the second half reaction, it can then transfer the acetyl group from AcAMP to the sulfhydryl group of CoA, forming the product AcCoA. The protein is Acetyl-coenzyme A synthetase of Ralstonia pickettii (strain 12J).